Here is a 378-residue protein sequence, read N- to C-terminus: Holliday junction branch migration complex subunit RuvB 1 (378 aa).

The segment covering 1 to 12 (MAIISSRDTGQN) has biased composition (polar residues). Positions 1–62 (MAIISSRDTG…PGEAQEESLR (62 aa)) are disordered. The tract at residues 13–222 (AEGPKRRQQK…FGHVQRLRFY (210 aa)) is large ATPase domain (RuvB-L). ATP is bound by residues leucine 61, arginine 62, glycine 103, lysine 106, threonine 107, threonine 108, 169 to 171 (EDF), arginine 212, tyrosine 222, and arginine 259. Threonine 107 is a binding site for Mg(2+). The interval 223–293 (EPHELVQIVL…VAAAALELFQ (71 aa)) is small ATPAse domain (RuvB-S). The segment at 296 to 378 (PMGLDWIDRK…EAQSPLPLWS (83 aa)) is head domain (RuvB-H). Positions 351 and 356 each coordinate DNA.

Belongs to the RuvB family. In terms of assembly, homohexamer. Forms an RuvA(8)-RuvB(12)-Holliday junction (HJ) complex. HJ DNA is sandwiched between 2 RuvA tetramers; dsDNA enters through RuvA and exits via RuvB. An RuvB hexamer assembles on each DNA strand where it exits the tetramer. Each RuvB hexamer is contacted by two RuvA subunits (via domain III) on 2 adjacent RuvB subunits; this complex drives branch migration. In the full resolvosome a probable DNA-RuvA(4)-RuvB(12)-RuvC(2) complex forms which resolves the HJ.

Its subcellular location is the cytoplasm. It catalyses the reaction ATP + H2O = ADP + phosphate + H(+). Its function is as follows. The RuvA-RuvB-RuvC complex processes Holliday junction (HJ) DNA during genetic recombination and DNA repair, while the RuvA-RuvB complex plays an important role in the rescue of blocked DNA replication forks via replication fork reversal (RFR). RuvA specifically binds to HJ cruciform DNA, conferring on it an open structure. The RuvB hexamer acts as an ATP-dependent pump, pulling dsDNA into and through the RuvAB complex. RuvB forms 2 homohexamers on either side of HJ DNA bound by 1 or 2 RuvA tetramers; 4 subunits per hexamer contact DNA at a time. Coordinated motions by a converter formed by DNA-disengaged RuvB subunits stimulates ATP hydrolysis and nucleotide exchange. Immobilization of the converter enables RuvB to convert the ATP-contained energy into a lever motion, pulling 2 nucleotides of DNA out of the RuvA tetramer per ATP hydrolyzed, thus driving DNA branch migration. The RuvB motors rotate together with the DNA substrate, which together with the progressing nucleotide cycle form the mechanistic basis for DNA recombination by continuous HJ branch migration. Branch migration allows RuvC to scan DNA until it finds its consensus sequence, where it cleaves and resolves cruciform DNA. This Synechococcus sp. (strain JA-3-3Ab) (Cyanobacteria bacterium Yellowstone A-Prime) protein is Holliday junction branch migration complex subunit RuvB 1.